The chain runs to 637 residues: 1-deoxy-D-xylulose-5-phosphate synthase (637 aa).

Residues His-71 and 112 to 114 (SHA) each bind thiamine diphosphate. Mg(2+) is bound at residue Asp-144. Thiamine diphosphate-binding positions include 145 to 146 (GA), Asn-173, Tyr-284, and Glu-365. Asn-173 lines the Mg(2+) pocket.

The protein belongs to the transketolase family. DXPS subfamily. Homodimer. Mg(2+) is required as a cofactor. It depends on thiamine diphosphate as a cofactor.

The enzyme catalyses D-glyceraldehyde 3-phosphate + pyruvate + H(+) = 1-deoxy-D-xylulose 5-phosphate + CO2. The protein operates within metabolic intermediate biosynthesis; 1-deoxy-D-xylulose 5-phosphate biosynthesis; 1-deoxy-D-xylulose 5-phosphate from D-glyceraldehyde 3-phosphate and pyruvate: step 1/1. Its function is as follows. Catalyzes the acyloin condensation reaction between C atoms 2 and 3 of pyruvate and glyceraldehyde 3-phosphate to yield 1-deoxy-D-xylulose-5-phosphate (DXP). The sequence is that of 1-deoxy-D-xylulose-5-phosphate synthase from Mycobacterium ulcerans (strain Agy99).